Here is a 192-residue protein sequence, read N- to C-terminus: Early nodulin-like protein 7 (192 aa).

The first 27 residues, 1 to 27 (MMMMMMRSTCNLTLMLCICALVVASMA), serve as a signal peptide directing secretion. The region spanning 32–134 (RDFKVGDEFG…GQRLIVEVMH (103 aa)) is the Phytocyanin domain. 3 N-linked (GlcNAc...) asparagine glycosylation sites follow: Asn48, Asn89, and Asn101. A disulfide bridge links Cys88 with Cys122. Ser166 is lipidated: GPI-anchor amidated serine. Positions 167–192 (AASSLPTACLLIPLFLTIASFRFISY) are cleaved as a propeptide — removed in mature form.

This sequence belongs to the early nodulin-like (ENODL) family. As to expression, mostly expressed in flowers, and, to a lower extent, in seeds, but barely in seedlings, stems, leaves and roots.

Its subcellular location is the cell membrane. May act as a carbohydrate transporter. This is Early nodulin-like protein 7 from Arabidopsis thaliana (Mouse-ear cress).